Reading from the N-terminus, the 141-residue chain is Large ribosomal subunit protein uL22c (141 aa).

The protein belongs to the universal ribosomal protein uL22 family. Part of the 50S ribosomal subunit.

Its subcellular location is the plastid. It localises to the chloroplast. Functionally, this protein binds specifically to 23S rRNA. The globular domain of the protein is located near the polypeptide exit tunnel on the outside of the subunit, while an extended beta-hairpin is found that lines the wall of the exit tunnel in the center of the 70S ribosome. The protein is Large ribosomal subunit protein uL22c (rpl22) of Chloranthus spicatus (Chulantree).